The primary structure comprises 211 residues: Wound-induced protein WIN2 (211 aa).

The N-terminal stretch at 1-25 (MVKLSCGPILLALVLCISLTSVANA) is a signal peptide. A Chitin-binding type-1 domain is found at 26–68 (QQCGRQRGGALCGNNLCCSQFGWCGSTPEYCSPSQGCQSQCTG). Intrachain disulfides connect Cys28/Cys43, Cys37/Cys49, Cys42/Cys56, and Cys62/Cys66. A Barwin domain is found at 77–198 (GSAQNVRATY…VNYQFVNCGD (122 aa)).

In Solanum tuberosum (Potato), this protein is Wound-induced protein WIN2 (WIN2).